A 428-amino-acid chain; its full sequence is Histidinol dehydrogenase (428 aa).

3 residues coordinate substrate: Ser234, Gln256, and His259. Gln256 and His259 together coordinate Zn(2+). Residues Glu323 and His324 each act as proton acceptor in the active site. Substrate-binding residues include His324, Asp357, Glu411, and His416. Asp357 provides a ligand contact to Zn(2+). Position 416 (His416) interacts with Zn(2+).

It belongs to the histidinol dehydrogenase family. Zn(2+) serves as cofactor.

The enzyme catalyses L-histidinol + 2 NAD(+) + H2O = L-histidine + 2 NADH + 3 H(+). It functions in the pathway amino-acid biosynthesis; L-histidine biosynthesis; L-histidine from 5-phospho-alpha-D-ribose 1-diphosphate: step 9/9. Catalyzes the sequential NAD-dependent oxidations of L-histidinol to L-histidinaldehyde and then to L-histidine. This Campylobacter jejuni subsp. jejuni serotype O:2 (strain ATCC 700819 / NCTC 11168) protein is Histidinol dehydrogenase.